A 231-amino-acid polypeptide reads, in one-letter code: Ion-translocating oxidoreductase complex subunit E (231 aa).

A run of 6 helical transmembrane segments spans residues 18-38, 39-59, 63-83, 86-106, 125-145, and 182-202; these read ALVQLLGLCPLLAVTSTATNA, LGLGLATTLVLTLTNLTISTL, TPAEIRIPIYVMIIASVVSAV, LINAYAFGLYQSLGIFIPLIV, ALSALDGFSIGMGATCAMFVL, and PFLLAMLPPSAFIGLGLMLAG.

It belongs to the NqrDE/RnfAE family. The complex is composed of six subunits: RsxA, RsxB, RsxC, RsxD, RsxE and RsxG.

The protein resides in the cell inner membrane. In terms of biological role, part of a membrane-bound complex that couples electron transfer with translocation of ions across the membrane. Required to maintain the reduced state of SoxR. In Escherichia coli O7:K1 (strain IAI39 / ExPEC), this protein is Ion-translocating oxidoreductase complex subunit E.